We begin with the raw amino-acid sequence, 202 residues long: Small ribosomal subunit protein uS4 (202 aa).

A disordered region spans residues 22–43 (TRKSARRAYPPGQHGQNRRKRS). An S4 RNA-binding domain is found at 90–152 (MRLDNTVFRL…EKSKEMVKTN (63 aa)).

This sequence belongs to the universal ribosomal protein uS4 family. In terms of assembly, part of the 30S ribosomal subunit. Contacts protein S5. The interaction surface between S4 and S5 is involved in control of translational fidelity.

One of the primary rRNA binding proteins, it binds directly to 16S rRNA where it nucleates assembly of the body of the 30S subunit. Functionally, with S5 and S12 plays an important role in translational accuracy. The protein is Small ribosomal subunit protein uS4 of Trichodesmium erythraeum (strain IMS101).